A 423-amino-acid polypeptide reads, in one-letter code: Histidine--tRNA ligase (423 aa).

Belongs to the class-II aminoacyl-tRNA synthetase family. In terms of assembly, homodimer.

Its subcellular location is the cytoplasm. It carries out the reaction tRNA(His) + L-histidine + ATP = L-histidyl-tRNA(His) + AMP + diphosphate + H(+). The sequence is that of Histidine--tRNA ligase from Laribacter hongkongensis (strain HLHK9).